Here is a 561-residue protein sequence, read N- to C-terminus: MSLFFKPVISPQWSFPVLLKIGVRSYAGGPRTKHKGNSPLASVPTGSSNKNRKQKAKGKKGNKKNDPDQAFNFGEYGGLKKDVEMNMDSTNKLIQKISNFDQLLILPPVRDAVKEIISKESLKLQDSRKKTSENIIPSPIQTVAIKRISKNLMDPKLQIHAIAAETGSGKTMAYLIPLIDYLKRQELETPELWETLRKNVLIRSIILVPTHELVDQVYETVSKTKTLLGLNSFKWDKATSYRDLLENIKNRIDILVTTPGKLLNLFSIRMITRPDKVLSKVGFVVLDEADTLLDRSWLEETHSAIKRIPNINHLIFCSATIPQEFNKTMQRLFPTVVPIMTPRLHKLPFALDFKVINSALSPFKGSKIKALAQTLYAISNDDTEPGFEKRCIIFVNEKKNVPEIVNLLNKKFGHNAIGLTGEDTFEERSEKIMPFLSPPRPLSEVVAQSTSPPTSLKKFEIPDSNIVIGKLKNTNSNGTAPSNKSLHVLVTTDLMARGLNFKGVRNVVLYDVPKTSIDLIHRVGRTARMKQGGRVFMLTDSKTKSWAKALPKIIKKHQRLS.

The transit peptide at 1–26 (MSLFFKPVISPQWSFPVLLKIGVRSY) directs the protein to the mitochondrion. Residues 29 to 72 (GPRTKHKGNSPLASVPTGSSNKNRKQKAKGKKGNKKNDPDQAFN) are disordered. Positions 50–62 (KNRKQKAKGKKGN) are enriched in basic residues. The Q motif motif lies at 98–129 (SNFDQLLILPPVRDAVKEIISKESLKLQDSRK). Residues 131-319 (TSENIIPSPI…NINHLIFCSA (189 aa)) enclose the Helicase ATP-binding domain. 144-151 (AIKRISKN) provides a ligand contact to ATP. Positions 267–270 (SIRM) match the DEAD box motif. Residues 350–539 (ALDFKVINSA…KQGGRVFMLT (190 aa)) form the Helicase C-terminal domain.

The protein belongs to the DEAD box helicase family. MRH4 subfamily.

It localises to the mitochondrion. It catalyses the reaction ATP + H2O = ADP + phosphate + H(+). In terms of biological role, ATP-binding RNA helicase involved in mitochondrial RNA metabolism. Required for maintenance of mitochondrial DNA. The protein is ATP-dependent RNA helicase MRH4, mitochondrial (MRH4) of Saccharomyces cerevisiae (strain YJM789) (Baker's yeast).